The primary structure comprises 392 residues: MLLMLSQWLQGLSPEFGFLRVFQYLTMRAVMAALTALVIGLLAGPRLIRMLTSLKIGQPVRGYGMETHLAKSGTPTMGGALILLSIAVSTLLWFDLSNRFVWIVLLVTLGFGTIGWVDDWRKVVNKDPEGMRSGEKYFWQSVIGLLAALYLVFCISENSNAQVFELFVTWVQSGFALDLPPKAGLLVPFFKEVSYPLGVLGFVIMTYLVIVGASNAVNLTDGLDGLAIMPVIMVGSALGIFAYVTGNAGYAKYLLFPHIPGSGELLVYCAAMAGAGLAFLWFNAHPAQVFMGDVGALALGASLGTIAVIVRQEIVLAIMGGIFVVEALSVMLQVTWFKFTKKRYGQGRRLLKMAPLHHHFEKSGWKETQVVIRFWIITMLLCLLGLSTLKLR.

11 helical membrane passes run 24–44, 76–96, 100–120, 137–157, 170–190, 193–213, 225–245, 262–282, 289–309, 314–334, and 369–389; these read YLTM…LLAG, TMGG…WFDL, FVWI…VDDW, YFWQ…CISE, WVQS…VPFF, VSYP…IVGA, GLAI…AYVT, SGEL…FLWF, VFMG…IAVI, IVLA…MLQV, and QVVI…LSTL.

The protein belongs to the glycosyltransferase 4 family. MraY subfamily. The cofactor is Mg(2+).

It is found in the cell inner membrane. It carries out the reaction UDP-N-acetyl-alpha-D-muramoyl-L-alanyl-gamma-D-glutamyl-meso-2,6-diaminopimeloyl-D-alanyl-D-alanine + di-trans,octa-cis-undecaprenyl phosphate = di-trans,octa-cis-undecaprenyl diphospho-N-acetyl-alpha-D-muramoyl-L-alanyl-D-glutamyl-meso-2,6-diaminopimeloyl-D-alanyl-D-alanine + UMP. It functions in the pathway cell wall biogenesis; peptidoglycan biosynthesis. Catalyzes the initial step of the lipid cycle reactions in the biosynthesis of the cell wall peptidoglycan: transfers peptidoglycan precursor phospho-MurNAc-pentapeptide from UDP-MurNAc-pentapeptide onto the lipid carrier undecaprenyl phosphate, yielding undecaprenyl-pyrophosphoryl-MurNAc-pentapeptide, known as lipid I. The polypeptide is Phospho-N-acetylmuramoyl-pentapeptide-transferase (Delftia acidovorans (strain DSM 14801 / SPH-1)).